The sequence spans 114 residues: UPF0102 protein HP_0823 (114 aa).

The protein belongs to the UPF0102 family.

The polypeptide is UPF0102 protein HP_0823 (Helicobacter pylori (strain ATCC 700392 / 26695) (Campylobacter pylori)).